The following is a 95-amino-acid chain: Protein TusB (95 aa).

Belongs to the DsrH/TusB family. Heterohexamer, formed by a dimer of trimers. The hexameric TusBCD complex contains 2 copies each of TusB, TusC and TusD. The TusBCD complex interacts with TusE.

Its subcellular location is the cytoplasm. Functionally, part of a sulfur-relay system required for 2-thiolation of 5-methylaminomethyl-2-thiouridine (mnm(5)s(2)U) at tRNA wobble positions. The protein is Protein TusB of Buchnera aphidicola subsp. Schizaphis graminum (strain Sg).